The primary structure comprises 619 residues: DNA mismatch repair protein MutL (619 aa).

Positions 358–401 are disordered; that stretch reads GGNQFARPSEAREAATRFSITSSREPAASGGSSGGASWPHAQPG.

The protein belongs to the DNA mismatch repair MutL/HexB family.

Functionally, this protein is involved in the repair of mismatches in DNA. It is required for dam-dependent methyl-directed DNA mismatch repair. May act as a 'molecular matchmaker', a protein that promotes the formation of a stable complex between two or more DNA-binding proteins in an ATP-dependent manner without itself being part of a final effector complex. The chain is DNA mismatch repair protein MutL from Klebsiella pneumoniae (strain 342).